The sequence spans 88 residues: Long neurotoxin 31 (88 aa).

The first 21 residues, Met1–Ser21, serve as a signal peptide directing secretion. 5 disulfide bridges follow: Cys24–Cys42, Cys35–Cys63, Cys48–Cys52, Cys67–Cys78, and Cys79–Cys84.

It belongs to the three-finger toxin family. Long-chain subfamily. Type II alpha-neurotoxin sub-subfamily. As to expression, expressed by the venom gland.

It is found in the secreted. Its function is as follows. Binds with high affinity to muscular (alpha-1/CHRNA1) and neuronal (alpha-7/CHRNA7) nicotinic acetylcholine receptor (nAChR) and inhibits acetylcholine from binding to the receptor, thereby impairing neuromuscular and neuronal transmission. The polypeptide is Long neurotoxin 31 (Drysdalia coronoides (White-lipped snake)).